The sequence spans 306 residues: Pantothenate kinase (306 aa).

Residue 91 to 98 (GSVAVGKS) participates in ATP binding.

Belongs to the prokaryotic pantothenate kinase family.

Its subcellular location is the cytoplasm. It catalyses the reaction (R)-pantothenate + ATP = (R)-4'-phosphopantothenate + ADP + H(+). The protein operates within cofactor biosynthesis; coenzyme A biosynthesis; CoA from (R)-pantothenate: step 1/5. This chain is Pantothenate kinase, found in Streptococcus pyogenes serotype M49 (strain NZ131).